Consider the following 269-residue polypeptide: Glutamate racemase (269 aa).

Substrate is bound by residues 11 to 12 (DS) and 43 to 44 (YG). The Proton donor/acceptor role is filled by Cys-74. A substrate-binding site is contributed by 75–76 (NT). Cys-185 serves as the catalytic Proton donor/acceptor. Residue 186 to 187 (TH) participates in substrate binding.

This sequence belongs to the aspartate/glutamate racemases family.

It carries out the reaction L-glutamate = D-glutamate. It participates in cell wall biogenesis; peptidoglycan biosynthesis. In terms of biological role, provides the (R)-glutamate required for cell wall biosynthesis. In Bacillus cereus (strain ATCC 10987 / NRS 248), this protein is Glutamate racemase.